A 280-amino-acid polypeptide reads, in one-letter code: DegV domain-containing protein SPy_1698/M5005_Spy1391 (280 aa).

The DegV domain maps to 3 to 280 (WKIVTDSGCD…DGGLLMGYEI (278 aa)). Residues Ser-63 and Ser-91 each coordinate hexadecanoate.

Functionally, may bind long-chain fatty acids, such as palmitate, and may play a role in lipid transport or fatty acid metabolism. The chain is DegV domain-containing protein SPy_1698/M5005_Spy1391 from Streptococcus pyogenes serotype M1.